Here is a 64-residue protein sequence, read N- to C-terminus: Conotoxin Vc1.3 (64 aa).

The first 21 residues, M1–S21, serve as a signal peptide directing secretion. Residues F22–I43 constitute a propeptide that is removed on maturation. Intrachain disulfides connect C46–C52 and C47–C60. C60 is modified (cysteine amide).

Belongs to the conotoxin A superfamily. As to expression, expressed by the venom duct.

It is found in the secreted. May act as a toxin. This chain is Conotoxin Vc1.3, found in Conus victoriae (Queen Victoria cone).